Here is a 314-residue protein sequence, read N- to C-terminus: Olfactory receptor 9I1 (314 aa).

Residues 1 to 25 (MAKNNLTRVTEFILMGFMDHPKLEI) are Extracellular-facing. The N-linked (GlcNAc...) asparagine glycan is linked to asparagine 5. The helical transmembrane segment at 26 to 46 (PLFLVFLSFYLVTLLGNVGMI) threads the bilayer. Residues 47–54 (MLIQVDVK) lie on the Cytoplasmic side of the membrane. The chain crosses the membrane as a helical span at residues 55–75 (LYTPMYFFLSHLSLLDACYTS). At 76–99 (VITPQILATLATGKTVISYGHCAA) the chain is on the extracellular side. Cysteine 97 and cysteine 189 are oxidised to a cystine. A helical membrane pass occupies residues 100–120 (QFFLFTICAGTECFLLAVMAY). The Cytoplasmic portion of the chain corresponds to 121 to 139 (DRYAAIRNPLLYTVAMNPR). The helical transmembrane segment at 140 to 160 (LCWSLVVGAYVCGVSGAILRT) threads the bilayer. Residues 161-197 (TCTFTLSFCKDNQINFFFCDLPPLLKLACSDTANIEI) lie on the Extracellular side of the membrane. Residues 198–217 (VIIFFGNFVILANASVILIS) traverse the membrane as a helical segment. The Cytoplasmic portion of the chain corresponds to 218–237 (YLLIIKTILKVKSSGGRAKT). A helical transmembrane segment spans residues 238-258 (FSTCASHITAVALFFGALIFM). Residues 259–271 (YLQSGSGKSLEED) lie on the Extracellular side of the membrane. A helical transmembrane segment spans residues 272–292 (KVVSVFYTVVIPMLNPLIYSL). Over 293–314 (RNKDVKDAFRKVARRLQVSLSM) the chain is Cytoplasmic.

Belongs to the G-protein coupled receptor 1 family.

It is found in the cell membrane. Functionally, odorant receptor. This chain is Olfactory receptor 9I1 (OR9I1), found in Homo sapiens (Human).